The chain runs to 370 residues: Calcium/calmodulin-dependent protein kinase type 1 (370 aa).

In terms of domain architecture, Protein kinase spans 20-276 (YDFRDVLGTG…CEQALQHPWI (257 aa)). ATP-binding positions include 26–34 (LGTGAFSEV) and Lys-49. Residue Lys-59 forms a Glycyl lysine isopeptide (Lys-Gly) (interchain with G-Cter in ubiquitin) linkage. The active-site Proton acceptor is Asp-141. The residue at position 177 (Thr-177) is a Phosphothreonine; by CaMKK1 and CaMKK2. The autoinhibitory domain stretch occupies residues 276 to 316 (IAGDTALDKNIHQSVSEQIKKNFAKSKWKQAFNATAVVRHM). The segment at 296 to 317 (KNFAKSKWKQAFNATAVVRHMR) is calmodulin-binding. Residues 315 to 321 (HMRKLQL) carry the Nuclear export signal motif. At Ser-363 the chain carries Phosphoserine.

The protein belongs to the protein kinase superfamily. CAMK Ser/Thr protein kinase family. CaMK subfamily. As to quaternary structure, monomer. Interacts with XPO1. Interacts with MARK2, ARHGEF7/BETAPIX and GIT1. In terms of processing, phosphorylated by CaMKK1 and CaMKK2 on Thr-177. Post-translationally, polybiquitinated by the E3 ubiquitin-protein ligase complex SCF(FBXL12), leading to proteasomal degradation. Widely expressed. Expressed in cells of the zona glomerulosa of the adrenal cortex.

The protein resides in the cytoplasm. Its subcellular location is the nucleus. The catalysed reaction is L-seryl-[protein] + ATP = O-phospho-L-seryl-[protein] + ADP + H(+). It carries out the reaction L-threonyl-[protein] + ATP = O-phospho-L-threonyl-[protein] + ADP + H(+). With respect to regulation, activated by Ca(2+)/calmodulin. Binding of calmodulin results in conformational change that relieves intrasteric autoinhibition and allows phosphorylation of Thr-177 within the activation loop by CaMKK1 or CaMKK2. Phosphorylation of Thr-177 results in several fold increase in total activity. Unlike CaMK4, is unable to exhibit autonomous activity after Ca(2+)/calmodulin activation. Calcium/calmodulin-dependent protein kinase that operates in the calcium-triggered CaMKK-CaMK1 signaling cascade and, upon calcium influx, regulates transcription activators activity, cell cycle, hormone production, cell differentiation, actin filament organization and neurite outgrowth. Recognizes the substrate consensus sequence [MVLIF]-x-R-x(2)-[ST]-x(3)-[MVLIF]. Regulates axonal extension and growth cone motility in hippocampal and cerebellar nerve cells. Upon NMDA receptor-mediated Ca(2+) elevation, promotes dendritic growth in hippocampal neurons and is essential in synapses for full long-term potentiation (LTP) and ERK2-dependent translational activation. Downstream of NMDA receptors, promotes the formation of spines and synapses in hippocampal neurons by phosphorylating ARHGEF7/BETAPIX on 'Ser-694', which results in the enhancement of ARHGEF7 activity and activation of RAC1. Promotes neuronal differentiation and neurite outgrowth by activation and phosphorylation of MARK2 on 'Ser-91', 'Ser-92', 'Ser-93' and 'Ser-294'. Promotes nuclear export of HDAC5 and binding to 14-3-3 by phosphorylation of 'Ser-259' and 'Ser-498' in the regulation of muscle cell differentiation. Regulates NUMB-mediated endocytosis by phosphorylation of NUMB on 'Ser-276' and 'Ser-295'. Involved in the regulation of basal and estrogen-stimulated migration of medulloblastoma cells through ARHGEF7/BETAPIX phosphorylation. Is required for proper activation of cyclin-D1/CDK4 complex during G1 progression in diploid fibroblasts. Plays a role in K(+) and ANG2-mediated regulation of the aldosterone synthase (CYP11B2) to produce aldosterone in the adrenal cortex. Phosphorylates EIF4G3/eIF4GII. In vitro phosphorylates CREB1, ATF1, CFTR, MYL9 and SYN1/synapsin I. This is Calcium/calmodulin-dependent protein kinase type 1 (CAMK1) from Homo sapiens (Human).